Here is a 247-residue protein sequence, read N- to C-terminus: Chaperone protein AfaB (247 aa).

Residues 1–29 (MKMRAVAVFTGMLTGVLSVAGLLSAGAYA) form the signal peptide.

Belongs to the periplasmic pilus chaperone family.

The protein localises to the periplasm. Involved in the biogenesis of the AFA-III afimbrial adhesin. The sequence is that of Chaperone protein AfaB (afaB) from Escherichia coli.